The primary structure comprises 73 residues: Large ribosomal subunit protein bL31 (73 aa).

Belongs to the bacterial ribosomal protein bL31 family. Type A subfamily. As to quaternary structure, part of the 50S ribosomal subunit.

Its function is as follows. Binds the 23S rRNA. In Bartonella henselae (strain ATCC 49882 / DSM 28221 / CCUG 30454 / Houston 1) (Rochalimaea henselae), this protein is Large ribosomal subunit protein bL31.